A 124-amino-acid chain; its full sequence is Small ribosomal subunit protein uS12 (124 aa).

Asp89 is subject to 3-methylthioaspartic acid.

Belongs to the universal ribosomal protein uS12 family. In terms of assembly, part of the 30S ribosomal subunit. Contacts proteins S8 and S17. May interact with IF1 in the 30S initiation complex.

In terms of biological role, with S4 and S5 plays an important role in translational accuracy. Functionally, interacts with and stabilizes bases of the 16S rRNA that are involved in tRNA selection in the A site and with the mRNA backbone. Located at the interface of the 30S and 50S subunits, it traverses the body of the 30S subunit contacting proteins on the other side and probably holding the rRNA structure together. The combined cluster of proteins S8, S12 and S17 appears to hold together the shoulder and platform of the 30S subunit. The protein is Small ribosomal subunit protein uS12 of Blochmanniella floridana.